The sequence spans 80 residues: Probable small nuclear ribonucleoprotein G (80 aa).

Residues 5-76 enclose the Sm domain; that stretch reads GQPPDLKKYM…IVTVEALEPV (72 aa).

This sequence belongs to the snRNP Sm proteins family.

The protein localises to the nucleus. Its function is as follows. Probable common Sm protein, is found in U1 and U2 snRNPs and may be part of the spliceosome. This chain is Probable small nuclear ribonucleoprotein G, found in Arabidopsis thaliana (Mouse-ear cress).